The primary structure comprises 125 residues: Large ribosomal subunit protein bL12 (125 aa).

The interval 96–125 (PAPVKEGATKDEAEEIKKKIEEAGGTAELK) is disordered. The segment covering 102–117 (GATKDEAEEIKKKIEE) has biased composition (basic and acidic residues).

It belongs to the bacterial ribosomal protein bL12 family. In terms of assembly, homodimer. Part of the ribosomal stalk of the 50S ribosomal subunit. Forms a multimeric L10(L12)X complex, where L10 forms an elongated spine to which 2 to 4 L12 dimers bind in a sequential fashion. Binds GTP-bound translation factors.

Functionally, forms part of the ribosomal stalk which helps the ribosome interact with GTP-bound translation factors. Is thus essential for accurate translation. This chain is Large ribosomal subunit protein bL12, found in Alcanivorax borkumensis (strain ATCC 700651 / DSM 11573 / NCIMB 13689 / SK2).